The primary structure comprises 128 residues: Translation initiation factor 5A (128 aa).

The residue at position 35 (lysine 35) is a Hypusine.

It belongs to the eIF-5A family.

The protein localises to the cytoplasm. Its function is as follows. Functions by promoting the formation of the first peptide bond. The protein is Translation initiation factor 5A of Methanosarcina barkeri (strain Fusaro / DSM 804).